The primary structure comprises 373 residues: Phospho-N-acetylmuramoyl-pentapeptide-transferase (373 aa).

A run of 10 helical transmembrane segments spans residues 34–54, 78–98, 100–120, 141–161, 181–201, 212–232, 252–272, 275–295, 301–321, and 350–370; these read GALFTSALIVFLFGPRIISSL, TPTMGGLMILAGIVVSSLLWA, LANVYVVATLLVTLGFGAIGF, LGLEFIIAAIAVYFMMNTALS, FMLNLGMFFVLFGAFVIVSAG, GLAIVPVMIAAASFGVIAYLA, LAVVLGAVIGAGLGFLWFNAP, AIFMGDTGSLALGGLIGTVAV, IVMAIIGGLFVLEALSVIIQV, and QVVVRFWIVAVILAMIGLSTL.

The protein belongs to the glycosyltransferase 4 family. MraY subfamily. It depends on Mg(2+) as a cofactor.

It is found in the cell inner membrane. It catalyses the reaction UDP-N-acetyl-alpha-D-muramoyl-L-alanyl-gamma-D-glutamyl-meso-2,6-diaminopimeloyl-D-alanyl-D-alanine + di-trans,octa-cis-undecaprenyl phosphate = di-trans,octa-cis-undecaprenyl diphospho-N-acetyl-alpha-D-muramoyl-L-alanyl-D-glutamyl-meso-2,6-diaminopimeloyl-D-alanyl-D-alanine + UMP. It functions in the pathway cell wall biogenesis; peptidoglycan biosynthesis. Catalyzes the initial step of the lipid cycle reactions in the biosynthesis of the cell wall peptidoglycan: transfers peptidoglycan precursor phospho-MurNAc-pentapeptide from UDP-MurNAc-pentapeptide onto the lipid carrier undecaprenyl phosphate, yielding undecaprenyl-pyrophosphoryl-MurNAc-pentapeptide, known as lipid I. The protein is Phospho-N-acetylmuramoyl-pentapeptide-transferase of Rhizobium rhizogenes (strain K84 / ATCC BAA-868) (Agrobacterium radiobacter).